Consider the following 343-residue polypeptide: MAEYDHYEDDGFLNSFNDSSQEEHQDFLQFRKVFLPCMYLVVFVCGLVGNSLVLVISIFYHKLQSLTDVFLVNLPLADLVFVCTLPFWAYAGIHEWIFGQVMCKTLLGVYTINFYTSMLILTCITVDRFIVVVKATKAYNQQAKRMTWGKVICLLIWVISLLVSLPQIIYGNVFNLDKLICGYHDEEISTVVLATQMTLGFFLPLLAMIVCYSVIIKTLLHAGGFQKHRSLKIIFLVMAVFLLTQTPFNLVKLIRSTHWEYYAMTSFHYTIIVTEAIAYLRACLNPVLYAFVSLKFRKNFWKLVKDIGCLPYLGVSHQWKSSEDNSKTFSASHNVEATSMFQL.

Residues 1-33 (MAEYDHYEDDGFLNSFNDSSQEEHQDFLQFRKV) are Extracellular-facing. Asparagine 17 carries an N-linked (GlcNAc...) asparagine glycan. A helical membrane pass occupies residues 34–60 (FLPCMYLVVFVCGLVGNSLVLVISIFY). The Cytoplasmic segment spans residues 61 to 69 (HKLQSLTDV). A helical transmembrane segment spans residues 70–90 (FLVNLPLADLVFVCTLPFWAY). The Extracellular segment spans residues 91-104 (AGIHEWIFGQVMCK). Cysteine 103 and cysteine 181 are joined by a disulfide. The helical transmembrane segment at 105–126 (TLLGVYTINFYTSMLILTCITV) threads the bilayer. Residues 127-144 (DRFIVVVKATKAYNQQAK) are Cytoplasmic-facing. The helical transmembrane segment at 145–165 (RMTWGKVICLLIWVISLLVSL) threads the bilayer. Residues 166 to 188 (PQIIYGNVFNLDKLICGYHDEEI) are Extracellular-facing. Residues 189 to 216 (STVVLATQMTLGFFLPLLAMIVCYSVII) traverse the membrane as a helical segment. Topologically, residues 217-232 (KTLLHAGGFQKHRSLK) are cytoplasmic. Residues 233-260 (IIFLVMAVFLLTQTPFNLVKLIRSTHWE) form a helical membrane-spanning segment. The Extracellular segment spans residues 261–276 (YYAMTSFHYTIIVTEA). Residues 277–294 (IAYLRACLNPVLYAFVSL) traverse the membrane as a helical segment. Topologically, residues 295–343 (KFRKNFWKLVKDIGCLPYLGVSHQWKSSEDNSKTFSASHNVEATSMFQL) are cytoplasmic.

The protein belongs to the G-protein coupled receptor 1 family.

It localises to the cell membrane. In terms of biological role, receptor for the C-X-C chemokine CXCL16. Used as a coreceptor by SIVs and by strains of HIV-2 and m-tropic HIV-1. The chain is C-X-C chemokine receptor type 6 (CXCR6) from Macaca mulatta (Rhesus macaque).